We begin with the raw amino-acid sequence, 51 residues long: UPF0391 membrane protein Psyc_0130 (51 aa).

2 consecutive transmembrane segments (helical) span residues 6–26 (IIFAVIALLASFLGFGGVAGL) and 28–47 (ANFAYILLALAVILFIVAFV).

It belongs to the UPF0391 family.

Its subcellular location is the cell membrane. The sequence is that of UPF0391 membrane protein Psyc_0130 from Psychrobacter arcticus (strain DSM 17307 / VKM B-2377 / 273-4).